The sequence spans 102 residues: Small ribosomal subunit protein uS10 (102 aa).

It belongs to the universal ribosomal protein uS10 family. As to quaternary structure, part of the 30S ribosomal subunit.

Its function is as follows. Involved in the binding of tRNA to the ribosomes. The sequence is that of Small ribosomal subunit protein uS10 from Clostridium kluyveri (strain NBRC 12016).